The chain runs to 400 residues: MRPDKKNLSSLSAATLAVHGGNVADATSGAVRTPLVMANSYLLPEDPATMDWSSPDGLVYTRNQGHNQVCLEKKLAALEGCEAAVVFATGVAALHSVFFSFLKSGDHVIVSDITYQAVWRLFAELLPERYGIEATFVDVGDLDSVRQALRPNTRLIHTEVIANPTTKVADIGALTEIAHAHGALISVDATFTPPPFFRASQQGVDFVVHSLTKYINGHGDAMGGVVIGTQRMIDKIKNDALVDLGATISPFNAWMIMRGSVTLPLRLNQLLSSAGKIAEFLDSDDRIAYVYYPGLASHPQHELARRQFAGKGYGAMMAFAVKGDPDTQNRFVSNLRIITSAVSLGHDESLIVHVGAEGRGGFDKYPEEFRQYGHLRFSVGLEDPEDLISDITAALDETFK.

Position 213 is an N6-(pyridoxal phosphate)lysine (Lys213).

The protein belongs to the trans-sulfuration enzymes family. Pyridoxal 5'-phosphate is required as a cofactor.

It catalyses the reaction L-canavanine + H2O = N-hydroxyguanidine + L-homoserine. Lyase involved in the degradation of canavanine, the delta-oxa-analog of arginine, allowing growth on canavanine as sole nitrogen and carbon source. Catalyzes the elimination of hydroxyguanidine from canavanine with a subsequent water addition to yield homoserine. Is highly specific for canavanine and cannot use methionine, cystathionine or arginine. In Pseudomonas canavaninivorans, this protein is Canavanine gamma-lyase.